Consider the following 440-residue polypeptide: uncharacterized protein (440 aa).

10 helical membrane-spanning segments follow: residues 26–46 (NGLI…SSTF), 59–79 (FVFW…NGVL), 96–116 (FFLG…LKLK), 138–158 (LTLS…SIYL), 211–231 (FLVF…YLFA), 241–261 (LRKP…VGII), 263–283 (WIII…FVIF), 284–304 (WVIK…SLTI), 394–414 (FLII…SVFI), and 418–438 (IVQI…FTFI).

To M.pneumoniae MPN_087.

The protein localises to the cell membrane. This is an uncharacterized protein from Mycoplasma pneumoniae (strain ATCC 29342 / M129 / Subtype 1) (Mycoplasmoides pneumoniae).